The chain runs to 325 residues: tRNA U34 carboxymethyltransferase (325 aa).

Residues K91, W105, K110, G130, 152 to 154 (DPS), M196, Y200, and R315 contribute to the carboxy-S-adenosyl-L-methionine site.

The protein belongs to the class I-like SAM-binding methyltransferase superfamily. CmoB family. In terms of assembly, homotetramer.

It catalyses the reaction carboxy-S-adenosyl-L-methionine + 5-hydroxyuridine(34) in tRNA = 5-carboxymethoxyuridine(34) in tRNA + S-adenosyl-L-homocysteine + H(+). Catalyzes carboxymethyl transfer from carboxy-S-adenosyl-L-methionine (Cx-SAM) to 5-hydroxyuridine (ho5U) to form 5-carboxymethoxyuridine (cmo5U) at position 34 in tRNAs. In Aeromonas hydrophila subsp. hydrophila (strain ATCC 7966 / DSM 30187 / BCRC 13018 / CCUG 14551 / JCM 1027 / KCTC 2358 / NCIMB 9240 / NCTC 8049), this protein is tRNA U34 carboxymethyltransferase.